A 348-amino-acid chain; its full sequence is Phosphoribosylformylglycinamidine cyclo-ligase (348 aa).

This sequence belongs to the AIR synthase family.

The protein localises to the cytoplasm. It carries out the reaction 2-formamido-N(1)-(5-O-phospho-beta-D-ribosyl)acetamidine + ATP = 5-amino-1-(5-phospho-beta-D-ribosyl)imidazole + ADP + phosphate + H(+). The protein operates within purine metabolism; IMP biosynthesis via de novo pathway; 5-amino-1-(5-phospho-D-ribosyl)imidazole from N(2)-formyl-N(1)-(5-phospho-D-ribosyl)glycinamide: step 2/2. This chain is Phosphoribosylformylglycinamidine cyclo-ligase, found in Cereibacter sphaeroides (strain ATCC 17023 / DSM 158 / JCM 6121 / CCUG 31486 / LMG 2827 / NBRC 12203 / NCIMB 8253 / ATH 2.4.1.) (Rhodobacter sphaeroides).